The following is a 469-amino-acid chain: Cysteine protease ATG4D (469 aa).

The segment covering 1–29 has biased composition (polar residues); that stretch reads MNSVSPLATQYGSPKGSQQMENRSTQSGG. A disordered region spans residues 1–41; that stretch reads MNSVSPLATQYGSPKGSQQMENRSTQSGGHEQRKMGHQDAT. Cys131 functions as the Nucleophile in the catalytic mechanism. Residues 169–191 form a disordered region; sequence IRSSSPPSMPLSSLATGHSAGDY. The span at 171–182 shows a compositional bias: low complexity; that stretch reads SSSPPSMPLSSL. Catalysis depends on residues Asp356 and His358. Positions 436–469 are disordered; that stretch reads QEYAEGPQSSSHPPVCRKKGPLVKRPSSDEFEFL.

This sequence belongs to the peptidase C54 family.

Its subcellular location is the cytoplasm. It carries out the reaction [protein]-C-terminal L-amino acid-glycyl-phosphatidylethanolamide + H2O = [protein]-C-terminal L-amino acid-glycine + a 1,2-diacyl-sn-glycero-3-phosphoethanolamine. The enzyme catalyses [protein]-C-terminal L-amino acid-glycyl-phosphatidylserine + H2O = [protein]-C-terminal L-amino acid-glycine + a 1,2-diacyl-sn-glycero-3-phospho-L-serine. Its function is as follows. Cysteine protease that plays a key role in autophagy by mediating both proteolytic activation and delipidation of ATG8 family proteins. The protease activity is required for proteolytic activation of ATG8 family proteins to reveal a C-terminal glycine. Exposure of the glycine at the C-terminus is essential for ATG8 proteins conjugation to phosphatidylethanolamine (PE) and insertion to membranes, which is necessary for autophagy. In addition to the protease activity, also mediates delipidation of ATG8 family proteins. Catalyzes delipidation of PE-conjugated forms of ATG8 proteins during macroautophagy. Also involved in non-canonical autophagy, a parallel pathway involving conjugation of ATG8 proteins to single membranes at endolysosomal compartments, by catalyzing delipidation of ATG8 proteins conjugated to phosphatidylserine (PS). This Xenopus laevis (African clawed frog) protein is Cysteine protease ATG4D.